A 469-amino-acid polypeptide reads, in one-letter code: Neuraminidase (469 aa).

At 1–9 the chain is on the intravirion side; that stretch reads MNPNQKIIT. Residues 10–30 traverse the membrane as a helical segment; that stretch reads IGSVSLTIATVCFLMQIAILV. An involved in apical transport and lipid raft association region spans residues 11-33; sequence GSVSLTIATVCFLMQIAILVTTV. Residues 31–469 lie on the Virion surface side of the membrane; the sequence is TTVTLHFKQH…DGANINFMPI (439 aa). The segment at 36-88 is hypervariable stalk region; it reads HFKQHECDSPASNQVMPCEPIIIERNITEIVYLNNTTIEKEICPKVVEYRNWS. N-linked (GlcNAc...) asparagine; by host glycans are attached at residues Asn-61, Asn-69, Asn-70, and Asn-86. The segment at 91–469 is head of neuraminidase; the sequence is QCQITGFAPF…DGANINFMPI (379 aa). 9 disulfide bridges follow: Cys-92–Cys-417, Cys-124–Cys-129, Cys-175–Cys-193, Cys-183–Cys-230, Cys-232–Cys-237, Cys-278–Cys-291, Cys-280–Cys-289, Cys-318–Cys-337, and Cys-421–Cys-447. Arg-118 is a binding site for substrate. Asn-146 carries an N-linked (GlcNAc...) asparagine; by host glycan. Asp-151 (proton donor/acceptor) is an active-site residue. Arg-152 provides a ligand contact to substrate. Residues Asn-200 and Asn-234 are each glycosylated (N-linked (GlcNAc...) asparagine; by host). 276–277 lines the substrate pocket; sequence EE. Arg-292 provides a ligand contact to substrate. Positions 293, 297, and 324 each coordinate Ca(2+). The segment at 324–349 is disordered; it reads DTPRNDDRSSNSNCRNPNNERGTQGV. Over residues 333–342 the composition is skewed to low complexity; it reads SNSNCRNPNN. Ca(2+)-binding residues include Gly-345, Thr-346, and Gln-347. Arg-371 serves as a coordination point for substrate. Asn-402 is a glycosylation site (N-linked (GlcNAc...) asparagine; by host). Residue Tyr-406 is the Nucleophile of the active site.

This sequence belongs to the glycosyl hydrolase 34 family. Homotetramer. Requires Ca(2+) as cofactor. In terms of processing, N-glycosylated.

Its subcellular location is the virion membrane. It localises to the host apical cell membrane. It catalyses the reaction Hydrolysis of alpha-(2-&gt;3)-, alpha-(2-&gt;6)-, alpha-(2-&gt;8)- glycosidic linkages of terminal sialic acid residues in oligosaccharides, glycoproteins, glycolipids, colominic acid and synthetic substrates.. Its activity is regulated as follows. Inhibited by the neuraminidase inhibitors zanamivir (Relenza) and oseltamivir (Tamiflu). These drugs interfere with the release of progeny virus from infected cells and are effective against all influenza strains. Resistance to neuraminidase inhibitors is quite rare. Its function is as follows. Catalyzes the removal of terminal sialic acid residues from viral and cellular glycoconjugates. Cleaves off the terminal sialic acids on the glycosylated HA during virus budding to facilitate virus release. Additionally helps virus spread through the circulation by further removing sialic acids from the cell surface. These cleavages prevent self-aggregation and ensure the efficient spread of the progeny virus from cell to cell. Otherwise, infection would be limited to one round of replication. Described as a receptor-destroying enzyme because it cleaves a terminal sialic acid from the cellular receptors. May facilitate viral invasion of the upper airways by cleaving the sialic acid moieties on the mucin of the airway epithelial cells. Likely to plays a role in the budding process through its association with lipid rafts during intracellular transport. May additionally display a raft-association independent effect on budding. Plays a role in the determination of host range restriction on replication and virulence. Sialidase activity in late endosome/lysosome traffic seems to enhance virus replication. This Aves (Human) protein is Neuraminidase.